The sequence spans 179 residues: Large ribosomal subunit protein uL6 (179 aa).

The protein belongs to the universal ribosomal protein uL6 family. Part of the 50S ribosomal subunit.

This protein binds to the 23S rRNA, and is important in its secondary structure. It is located near the subunit interface in the base of the L7/L12 stalk, and near the tRNA binding site of the peptidyltransferase center. The sequence is that of Large ribosomal subunit protein uL6 from Pseudomonas savastanoi pv. phaseolicola (strain 1448A / Race 6) (Pseudomonas syringae pv. phaseolicola (strain 1448A / Race 6)).